The following is a 203-amino-acid chain: Urease accessory protein UreG (203 aa).

14 to 21 (GPVGSGKT) is a binding site for GTP.

This sequence belongs to the SIMIBI class G3E GTPase family. UreG subfamily. As to quaternary structure, homodimer. UreD, UreF and UreG form a complex that acts as a GTP-hydrolysis-dependent molecular chaperone, activating the urease apoprotein by helping to assemble the nickel containing metallocenter of UreC. The UreE protein probably delivers the nickel.

It localises to the cytoplasm. Facilitates the functional incorporation of the urease nickel metallocenter. This process requires GTP hydrolysis, probably effectuated by UreG. The chain is Urease accessory protein UreG from Rhizobium meliloti (strain 1021) (Ensifer meliloti).